Here is a 327-residue protein sequence, read N- to C-terminus: Zinc transport protein ZntB (327 aa).

Over 1 to 273 (MEAIKGSDVN…ARRTYTMSLM (273 aa)) the chain is Cytoplasmic. Residues 274-294 (AMVFLPSTFLTGLFGVNLGGI) form a helical membrane-spanning segment. The Periplasmic segment spans residues 295–300 (PGGGWR). The helical transmembrane segment at 301 to 321 (FGFSLFCILLVVLIGGVTLWL) threads the bilayer. The Cytoplasmic portion of the chain corresponds to 322–327 (HRSKWL).

This sequence belongs to the CorA metal ion transporter (MIT) (TC 1.A.35) family.

It localises to the cell inner membrane. It catalyses the reaction Zn(2+)(out) + H(+)(out) = Zn(2+)(in) + H(+)(in). Its function is as follows. Zinc transporter. Acts as a Zn(2+):proton symporter, which likely mediates zinc ion uptake. The polypeptide is Zinc transport protein ZntB (Salmonella choleraesuis (strain SC-B67)).